A 331-amino-acid chain; its full sequence is Glycerol-3-phosphate dehydrogenase [NAD(P)+] (331 aa).

NADPH is bound by residues tryptophan 14, arginine 34, and lysine 107. The sn-glycerol 3-phosphate site is built by lysine 107, glycine 135, and serine 137. Alanine 139 provides a ligand contact to NADPH. Sn-glycerol 3-phosphate is bound by residues lysine 190, aspartate 243, serine 253, arginine 254, and asparagine 255. Lysine 190 acts as the Proton acceptor in catalysis. An NADPH-binding site is contributed by arginine 254. Residues valine 278 and glutamate 280 each contribute to the NADPH site.

It belongs to the NAD-dependent glycerol-3-phosphate dehydrogenase family.

It is found in the cytoplasm. The catalysed reaction is sn-glycerol 3-phosphate + NAD(+) = dihydroxyacetone phosphate + NADH + H(+). It carries out the reaction sn-glycerol 3-phosphate + NADP(+) = dihydroxyacetone phosphate + NADPH + H(+). It functions in the pathway membrane lipid metabolism; glycerophospholipid metabolism. Functionally, catalyzes the reduction of the glycolytic intermediate dihydroxyacetone phosphate (DHAP) to sn-glycerol 3-phosphate (G3P), the key precursor for phospholipid synthesis. This Caulobacter vibrioides (strain ATCC 19089 / CIP 103742 / CB 15) (Caulobacter crescentus) protein is Glycerol-3-phosphate dehydrogenase [NAD(P)+].